A 398-amino-acid chain; its full sequence is Phosphoglycerate kinase (398 aa).

Residues 21 to 23, Arg36, 59 to 62, Arg119, and Arg157 each bind substrate; these read DFN and HLGR. Residues Lys208, Gly296, Glu327, and 354–357 each bind ATP; that span reads GGDS.

It belongs to the phosphoglycerate kinase family. Monomer.

It is found in the cytoplasm. The catalysed reaction is (2R)-3-phosphoglycerate + ATP = (2R)-3-phospho-glyceroyl phosphate + ADP. It participates in carbohydrate degradation; glycolysis; pyruvate from D-glyceraldehyde 3-phosphate: step 2/5. The polypeptide is Phosphoglycerate kinase (Streptococcus uberis (strain ATCC BAA-854 / 0140J)).